A 300-amino-acid chain; its full sequence is Ribosomal protein L11 methyltransferase (300 aa).

S-adenosyl-L-methionine is bound by residues threonine 152, glycine 173, aspartate 195, and asparagine 234.

The protein belongs to the methyltransferase superfamily. PrmA family.

The protein localises to the cytoplasm. It carries out the reaction L-lysyl-[protein] + 3 S-adenosyl-L-methionine = N(6),N(6),N(6)-trimethyl-L-lysyl-[protein] + 3 S-adenosyl-L-homocysteine + 3 H(+). Methylates ribosomal protein L11. This chain is Ribosomal protein L11 methyltransferase, found in Paraburkholderia xenovorans (strain LB400).